A 473-amino-acid polypeptide reads, in one-letter code: FAD-dependent monooxygeanse terM (473 aa).

The signal sequence occupies residues 1–22 (MSENFKVLIIGGSVAGLTLALC). 5 residues coordinate FAD: glutamate 34, glycine 48, arginine 107, aspartate 303, and alanine 316. A helical transmembrane segment spans residues 441–461 (VLYLICGALLAWWASGLVWHF).

It belongs to the paxM FAD-dependent monooxygenase family. Requires FAD as cofactor.

It localises to the membrane. It functions in the pathway secondary metabolite biosynthesis. FAD-dependent monooxygeanse; part of the gene cluster that mediates the biosynthesis of terpendoles, indole-diterpene (IDT) mycotoxins including terpendole I, terpendole K, terpendole C, as well as the kinesin Eg5 inhibitor terpendole E. Terpendoles biosynthesis begins with the synthesis of geranylgeranyl diphosphate (GGPP) by a yet unidentified GGPP synthase. Condensation of indole-3-glycerol phosphate with GGPP by the prenyltransferase terC then forms 3-geranylgeranylindole (3-GGI), followed by epoxidation and cyclization of this intermediate (by the FAD-dependent monooxygeanse terM and the terpene cyclase terB) to form paspaline. The cytochrome monooxygenase terQ then hydroxylates paspalline at C-11 to yield terpendole E. The cytochrome monooxygenase terP converts terpendole E to 13-desoxyterpendole I, and terQ converts 13-desoxyterpendole I into terpendole I. TerF and terK are required for conversion of terpendole I to terpendole C which is further converted to terpendole K. This is FAD-dependent monooxygeanse terM from Tolypocladium album (Soil fungus).